The following is a 194-amino-acid chain: 23 kDa U4/U6.U5 small nuclear ribonucleoprotein component (194 aa).

The C2H2-type zinc finger occupies 80–104 (FYCDICNLTFKDTLQYIDHLNHKVH).

Component of the U4/U6-U5 tri-snRNP complex composed of the U4, U6 and U5 snRNAs and at least PRP3, PRP4, PRP6, PRP8, PRP18, PRP31, PRP38, SNU13, SNU23, SNU66, SNU114, SPP381, SMB1, SMD1, SMD2, SMD3, SMX2, SMX3, LSM2, LSM3, LSM4, LSM5, LSM6, LSM7, LSM8, BRR2 and DIB1.

The protein localises to the nucleus. Participates in pre-mRNA splicing. Part of the U4/U5/U6 tri-snRNP complex, one of the building blocks of the spliceosome. This Saccharomyces cerevisiae (strain ATCC 204508 / S288c) (Baker's yeast) protein is 23 kDa U4/U6.U5 small nuclear ribonucleoprotein component (SNU23).